The chain runs to 221 residues: Phosphoribosylformylglycinamidine synthase subunit PurQ (221 aa).

The 220-residue stretch at 2–221 (NVGVIVFPGS…FAGLLEPVAA (220 aa)) folds into the Glutamine amidotransferase type-1 domain. The Nucleophile role is filled by Cys-86. Active-site residues include His-194 and Glu-196.

As to quaternary structure, part of the FGAM synthase complex composed of 1 PurL, 1 PurQ and 2 PurS subunits.

The protein resides in the cytoplasm. It catalyses the reaction N(2)-formyl-N(1)-(5-phospho-beta-D-ribosyl)glycinamide + L-glutamine + ATP + H2O = 2-formamido-N(1)-(5-O-phospho-beta-D-ribosyl)acetamidine + L-glutamate + ADP + phosphate + H(+). The enzyme catalyses L-glutamine + H2O = L-glutamate + NH4(+). It participates in purine metabolism; IMP biosynthesis via de novo pathway; 5-amino-1-(5-phospho-D-ribosyl)imidazole from N(2)-formyl-N(1)-(5-phospho-D-ribosyl)glycinamide: step 1/2. Its function is as follows. Part of the phosphoribosylformylglycinamidine synthase complex involved in the purines biosynthetic pathway. Catalyzes the ATP-dependent conversion of formylglycinamide ribonucleotide (FGAR) and glutamine to yield formylglycinamidine ribonucleotide (FGAM) and glutamate. The FGAM synthase complex is composed of three subunits. PurQ produces an ammonia molecule by converting glutamine to glutamate. PurL transfers the ammonia molecule to FGAR to form FGAM in an ATP-dependent manner. PurS interacts with PurQ and PurL and is thought to assist in the transfer of the ammonia molecule from PurQ to PurL. This is Phosphoribosylformylglycinamidine synthase subunit PurQ from Synechococcus sp. (strain ATCC 27144 / PCC 6301 / SAUG 1402/1) (Anacystis nidulans).